Reading from the N-terminus, the 362-residue chain is Epoxyqueuosine reductase (362 aa).

Residue D143 is the Proton donor of the active site. In terms of domain architecture, 4Fe-4S ferredoxin-type spans P191–M220. [4Fe-4S] cluster is bound by residues C200, C203, C206, C210, C226, C253, C256, and C260.

The protein belongs to the QueG family. As to quaternary structure, monomer. It depends on cob(II)alamin as a cofactor. The cofactor is [4Fe-4S] cluster.

The protein localises to the cytoplasm. The enzyme catalyses epoxyqueuosine(34) in tRNA + AH2 = queuosine(34) in tRNA + A + H2O. Its pathway is tRNA modification; tRNA-queuosine biosynthesis. Its function is as follows. Catalyzes the conversion of epoxyqueuosine (oQ) to queuosine (Q), which is a hypermodified base found in the wobble positions of tRNA(Asp), tRNA(Asn), tRNA(His) and tRNA(Tyr). This chain is Epoxyqueuosine reductase, found in Francisella cf. novicida (strain Fx1).